Here is a 274-residue protein sequence, read N- to C-terminus: 2,3,4,5-tetrahydropyridine-2,6-dicarboxylate N-succinyltransferase (274 aa).

Positions 105 and 142 each coordinate substrate.

It belongs to the transferase hexapeptide repeat family. As to quaternary structure, homotrimer.

The protein resides in the cytoplasm. The catalysed reaction is (S)-2,3,4,5-tetrahydrodipicolinate + succinyl-CoA + H2O = (S)-2-succinylamino-6-oxoheptanedioate + CoA. It participates in amino-acid biosynthesis; L-lysine biosynthesis via DAP pathway; LL-2,6-diaminopimelate from (S)-tetrahydrodipicolinate (succinylase route): step 1/3. This Thiobacillus denitrificans (strain ATCC 25259 / T1) protein is 2,3,4,5-tetrahydropyridine-2,6-dicarboxylate N-succinyltransferase.